Reading from the N-terminus, the 353-residue chain is Photosystem II protein D1 (353 aa).

Threonine 2 carries the N-acetylthreonine modification. Threonine 2 is modified (phosphothreonine). Helical transmembrane passes span 29 to 46 (YIGW…TATS), 118 to 133 (HFLL…EWEL), and 142 to 156 (WIAV…AATA). Histidine 118 serves as a coordination point for chlorophyll a. Pheophytin a is bound at residue tyrosine 126. [CaMn4O5] cluster-binding residues include aspartate 170 and glutamate 189. Residues 197–218 (FHMLGVAGVFGGSLFSAMHGSL) traverse the membrane as a helical segment. Residue histidine 198 coordinates chlorophyll a. Residues histidine 215 and 264–265 (SF) each bind a quinone. Histidine 215 is a Fe cation binding site. Histidine 272 is a Fe cation binding site. The helical transmembrane segment at 274-288 (FLAAWPVAGIWFTAL) threads the bilayer. The [CaMn4O5] cluster site is built by histidine 332, glutamate 333, aspartate 342, and alanine 344. Positions 345-353 (AVESISIGG) are excised as a propeptide.

It belongs to the reaction center PufL/M/PsbA/D family. As to quaternary structure, PSII is composed of 1 copy each of membrane proteins PsbA, PsbB, PsbC, PsbD, PsbE, PsbF, PsbH, PsbI, PsbJ, PsbK, PsbL, PsbM, PsbT, PsbX, PsbY, PsbZ, Psb30/Ycf12, at least 3 peripheral proteins of the oxygen-evolving complex and a large number of cofactors. It forms dimeric complexes. The cofactor is The D1/D2 heterodimer binds P680, chlorophylls that are the primary electron donor of PSII, and subsequent electron acceptors. It shares a non-heme iron and each subunit binds pheophytin, quinone, additional chlorophylls, carotenoids and lipids. D1 provides most of the ligands for the Mn4-Ca-O5 cluster of the oxygen-evolving complex (OEC). There is also a Cl(-1) ion associated with D1 and D2, which is required for oxygen evolution. The PSII complex binds additional chlorophylls, carotenoids and specific lipids.. In terms of processing, tyr-161 forms a radical intermediate that is referred to as redox-active TyrZ, YZ or Y-Z. Post-translationally, C-terminally processed by CTPA; processing is essential to allow assembly of the oxygen-evolving complex and thus photosynthetic growth.

The protein resides in the plastid. It is found in the chloroplast thylakoid membrane. It catalyses the reaction 2 a plastoquinone + 4 hnu + 2 H2O = 2 a plastoquinol + O2. In terms of biological role, photosystem II (PSII) is a light-driven water:plastoquinone oxidoreductase that uses light energy to abstract electrons from H(2)O, generating O(2) and a proton gradient subsequently used for ATP formation. It consists of a core antenna complex that captures photons, and an electron transfer chain that converts photonic excitation into a charge separation. The D1/D2 (PsbA/PsbD) reaction center heterodimer binds P680, the primary electron donor of PSII as well as several subsequent electron acceptors. The chain is Photosystem II protein D1 from Pinus koraiensis (Korean pine).